The chain runs to 352 residues: uncharacterized protein (352 aa).

An N-terminal signal peptide occupies residues 1–22; sequence MAIYLDKLKMPIIIGLIVLIIA.

This sequence belongs to the bacterial solute-binding protein 1 family. WtpA subfamily.

This is an uncharacterized protein from Staphylothermus marinus (strain ATCC 43588 / DSM 3639 / JCM 9404 / F1).